Consider the following 102-residue polypeptide: Small ribosomal subunit protein eS24 (102 aa).

This sequence belongs to the eukaryotic ribosomal protein eS24 family.

The sequence is that of Small ribosomal subunit protein eS24 (rps24e) from Haloarcula marismortui (strain ATCC 43049 / DSM 3752 / JCM 8966 / VKM B-1809) (Halobacterium marismortui).